Consider the following 156-residue polypeptide: SsrA-binding protein (156 aa).

Belongs to the SmpB family.

Its subcellular location is the cytoplasm. Required for rescue of stalled ribosomes mediated by trans-translation. Binds to transfer-messenger RNA (tmRNA), required for stable association of tmRNA with ribosomes. tmRNA and SmpB together mimic tRNA shape, replacing the anticodon stem-loop with SmpB. tmRNA is encoded by the ssrA gene; the 2 termini fold to resemble tRNA(Ala) and it encodes a 'tag peptide', a short internal open reading frame. During trans-translation Ala-aminoacylated tmRNA acts like a tRNA, entering the A-site of stalled ribosomes, displacing the stalled mRNA. The ribosome then switches to translate the ORF on the tmRNA; the nascent peptide is terminated with the 'tag peptide' encoded by the tmRNA and targeted for degradation. The ribosome is freed to recommence translation, which seems to be the essential function of trans-translation. The chain is SsrA-binding protein from Renibacterium salmoninarum (strain ATCC 33209 / DSM 20767 / JCM 11484 / NBRC 15589 / NCIMB 2235).